Reading from the N-terminus, the 80-residue chain is Protein UL148B (80 aa).

Residues 10 to 30 form a helical membrane-spanning segment; the sequence is AICVGLVMGVTVIASCALLVF.

It is found in the host membrane. This chain is Protein UL148B (UL148B), found in Homo sapiens (Human).